Consider the following 23-residue polypeptide: Acidic phospholipase A2 Cvv-E6c (23 aa).

Requires Ca(2+) as cofactor. Post-translationally, contains 7 disulfide bonds. In terms of tissue distribution, expressed by the venom gland.

It is found in the secreted. It catalyses the reaction a 1,2-diacyl-sn-glycero-3-phosphocholine + H2O = a 1-acyl-sn-glycero-3-phosphocholine + a fatty acid + H(+). In terms of biological role, snake venom phospholipase A2 (PLA2) that significantly inhibits ADP-induced platelet aggregation in platelet-rich plasma of human, rabbit and guinea pig. PLA2 catalyzes the calcium-dependent hydrolysis of the 2-acyl groups in 3-sn-phosphoglycerides. The protein is Acidic phospholipase A2 Cvv-E6c of Crotalus viridis viridis (Prairie rattlesnake).